Consider the following 365-residue polypeptide: UDP-galactose transporter homolog 1 (365 aa).

The next 2 membrane-spanning stretches (helical) occupy residues 42 to 62 (IIDLIICVSGIYASFLTWAVL) and 80 to 100 (ASLVINTVQSFLAAAVGYAYL). An N-linked (GlcNAc...) asparagine glycan is attached at asparagine 115. Transmembrane regions (helical) follow at residues 182 to 202 (YAVVVLVTIGVSMFTIFHAAP) and 206 to 226 (SGAGSEHQLYGLGLLGISMLL). The N-linked (GlcNAc...) asparagine glycan is linked to asparagine 231. 4 helical membrane passes run 249–269 (VMCGLNLLTGVFTTVSLLTFS), 289–309 (DIVLFGLCGAVGQVFIFQTLE), 315–335 (VLVTVNVTRKMFSMLLSVVWF), and 339–359 (LTLGQWAGVAAVFGGIGFEAW).

This sequence belongs to the nucleotide-sugar transporter family. SLC35B subfamily.

Its subcellular location is the endoplasmic reticulum membrane. In terms of biological role, may be involved in specific transport of UDP-Gal from the cytosol to the Golgi lumen. Involved in the maintenance of optimal conditions for the folding of secretory pathway proteins in the endoplasmic reticulum. The polypeptide is UDP-galactose transporter homolog 1 (HUT1) (Yarrowia lipolytica (strain CLIB 122 / E 150) (Yeast)).